Reading from the N-terminus, the 423-residue chain is Salicylate 5-hydroxylase, large oxygenase component (423 aa).

A disordered region spans residues Met1–Glu20. The Rieske domain maps to Trp49–Ala168. Cys91, His93, Cys111, and His114 together coordinate [2Fe-2S] cluster. Fe cation is bound by residues His224, His229, and Asp370.

It belongs to the bacterial ring-hydroxylating dioxygenase alpha subunit family. The salicylate 5-hydroxylase (S5H) multicomponent enzyme system is composed of an electron transfer component and an oxygenase component. The electron transfer component is comprised of a ferredoxin reductase (NagAa) and a ferredoxin (NagAb), and the oxygenase component is formed by a large subunit (NagG) and a small subunit (NagH). The cofactor is Fe cation. Requires [2Fe-2S] cluster as cofactor.

The enzyme catalyses salicylate + NADH + O2 + H(+) = 2,5-dihydroxybenzoate + NAD(+) + H2O. It participates in aromatic compound metabolism; naphthalene degradation. In terms of biological role, oxygenase component of the salicylate 5-hydroxylase (S5H) multicomponent enzyme system which catalyzes the 5-hydroxylation of salicylate to gentisate. Active only on substrates with a ring-substituted carboxylate group with an adjacent hydroxyl group. Primarily active against salicylate and substituted salicylates, but not against 2-hydroxycinnamate, 3-hydroxycinnamate, 2-hydroxyphenylacetate, 3-hydroxyphenylacetate, 2-hydroxybenzophenone, 1-hydroxy-2-naphthoate, 4-methoxysalicylate or 2-hydroxyacetophenone. This Ralstonia sp protein is Salicylate 5-hydroxylase, large oxygenase component.